A 562-amino-acid polypeptide reads, in one-letter code: Transcriptional adapter 2A (562 aa).

A ZZ-type zinc finger spans residues 91–146 (KDANRCATCRCSLTEPYIKCSECLDTLLCLQCFSRGKEAFSHRNNHAYIIVRDNIQ). Residues Cys96, Cys99, Cys110, Cys113, Cys119, Cys122, His132, and His136 each coordinate Zn(2+). Positions 154 to 198 (WTARDERILLKTLRTHGYGNWEAVSQALDQRHEPAEVRRHYHDCY) constitute an SANT domain. Positions 471–562 (CLTPTEYNFS…GHISRPPSYG (92 aa)) constitute an SWIRM domain.

Component of the Ada2a-containing (ATAC) complex composed of at least Ada2a, Atac1, Hcf, Ada3, Gcn5, Mocs2B, Charac-14, Atac3, Atac2, NC2beta and wds. Component of a complex that does not include Gcn5 or Ada3.

Its subcellular location is the nucleus. The protein localises to the chromosome. Functionally, component of the histone acetyltransferase (HAT) complex ATAC; predominantly involved in acetylation of histone H4, including at Lys-6 (H4K5ac) and Lys-13 (H4K12ac). May be part of several different complexes, including Gcn5-independent complexes involved in RNA polymerase II-dependent transcription. The protein is Transcriptional adapter 2A of Drosophila melanogaster (Fruit fly).